A 157-amino-acid polypeptide reads, in one-letter code: Crossover junction endodeoxyribonuclease RuvC (157 aa).

Active-site residues include D7, E67, and D140. D7, E67, and D140 together coordinate Mg(2+).

Belongs to the RuvC family. As to quaternary structure, homodimer which binds Holliday junction (HJ) DNA. The HJ becomes 2-fold symmetrical on binding to RuvC with unstacked arms; it has a different conformation from HJ DNA in complex with RuvA. In the full resolvosome a probable DNA-RuvA(4)-RuvB(12)-RuvC(2) complex forms which resolves the HJ. Requires Mg(2+) as cofactor.

The protein resides in the cytoplasm. The enzyme catalyses Endonucleolytic cleavage at a junction such as a reciprocal single-stranded crossover between two homologous DNA duplexes (Holliday junction).. In terms of biological role, the RuvA-RuvB-RuvC complex processes Holliday junction (HJ) DNA during genetic recombination and DNA repair. Endonuclease that resolves HJ intermediates. Cleaves cruciform DNA by making single-stranded nicks across the HJ at symmetrical positions within the homologous arms, yielding a 5'-phosphate and a 3'-hydroxyl group; requires a central core of homology in the junction. The consensus cleavage sequence is 5'-(A/T)TT(C/G)-3'. Cleavage occurs on the 3'-side of the TT dinucleotide at the point of strand exchange. HJ branch migration catalyzed by RuvA-RuvB allows RuvC to scan DNA until it finds its consensus sequence, where it cleaves and resolves the cruciform DNA. This is Crossover junction endodeoxyribonuclease RuvC from Rickettsia massiliae (strain Mtu5).